Consider the following 194-residue polypeptide: 5-formyltetrahydrofolate cyclo-ligase (194 aa).

Residues 6–10, 139–146, and Asp177 each bind ATP; these read KSQLR and GRGAGFYD.

It belongs to the 5-formyltetrahydrofolate cyclo-ligase family.

The enzyme catalyses (6S)-5-formyl-5,6,7,8-tetrahydrofolate + ATP = (6R)-5,10-methenyltetrahydrofolate + ADP + phosphate. It participates in one-carbon metabolism; tetrahydrofolate interconversion. In terms of biological role, involved in the removal of 5-formyltetrahydrofolate. In vitro, it is a potent inhibitor of various folate-dependent enzymes in the C1 metabolism network and in vivo it might function as a folate storage. 5-formyltetrahydrofolate is also used as an antifolate rescue agent in cancer chemotherapy. Catalyzes the irreversible ATP-dependent transformation of 5-formyltetrahydrofolate (5-CHO-THF) to form 5,10-methenyltetrahydrofolate (5,10-CH=THF). The reverse reaction is catalyzed by the serine hydroxymethyltransferase GlyA (SHMT). In Mycolicibacterium smegmatis (strain ATCC 700084 / mc(2)155) (Mycobacterium smegmatis), this protein is 5-formyltetrahydrofolate cyclo-ligase.